We begin with the raw amino-acid sequence, 876 residues long: Leucine--tRNA ligase (876 aa).

Residues 43–53 carry the 'HIGH' region motif; sequence PYPSGRIHMGH. The 'KMSKS' region signature appears at 632-636; the sequence is KMSKS. Position 635 (lysine 635) interacts with ATP.

This sequence belongs to the class-I aminoacyl-tRNA synthetase family.

The protein localises to the cytoplasm. It carries out the reaction tRNA(Leu) + L-leucine + ATP = L-leucyl-tRNA(Leu) + AMP + diphosphate. The sequence is that of Leucine--tRNA ligase from Rhodopseudomonas palustris (strain TIE-1).